The primary structure comprises 184 residues: Ribosome-recycling factor (184 aa).

The protein belongs to the RRF family.

It localises to the cytoplasm. Responsible for the release of ribosomes from messenger RNA at the termination of protein biosynthesis. May increase the efficiency of translation by recycling ribosomes from one round of translation to another. This chain is Ribosome-recycling factor, found in Cutibacterium acnes (strain DSM 16379 / KPA171202) (Propionibacterium acnes).